Here is a 248-residue protein sequence, read N- to C-terminus: Small ribosomal subunit protein eS1 (248 aa).

The disordered stretch occupies residues 1-21 (MAVGKDKRISKGKKGGKKKIV).

Belongs to the eukaryotic ribosomal protein eS1 family. Component of the small ribosomal subunit. Mature ribosomes consist of a small (40S) and a large (60S) subunit. The 40S subunit contains about 33 different proteins and 1 molecule of RNA (18S). The 60S subunit contains about 49 different proteins and 3 molecules of RNA (25S, 5.8S and 5S).

The protein localises to the cytoplasm. The sequence is that of Small ribosomal subunit protein eS1 from Syntrichia ruralis (Great hairy screw-moss).